Consider the following 341-residue polypeptide: THO complex subunit 6 homolog (341 aa).

7 WD repeats span residues 22–61, 74–112, 124–165, 166–205, 215–254, 256–293, and 295–339; these read RLHM…SSEA, AHDG…GCKE, LEVP…RALR, GHTD…EVQT, SRPH…PTTV, PIRA…KAQV, and GSSP…AFSL. At serine 180 the chain carries Phosphoserine.

It belongs to the WD repeat THOC6 family. In terms of assembly, component of the THO subcomplex, which is composed of THOC1, THOC2, THOC3, THOC5, THOC6 and THOC7. The THO subcomplex interacts with DDX39B to form the THO-DDX39B complex which multimerizes into a 28-subunit tetrameric assembly. Component of the transcription/export (TREX) complex at least composed of ALYREF/THOC4, DDX39B, SARNP/CIP29, CHTOP and the THO subcomplex; in the complex interacts with THOC5; together with THOC5 and THOC7, plays a key structural role in the oligomerization of the THO-DDX39B complex. TREX seems to have a dynamic structure involving ATP-dependent remodeling.

Its subcellular location is the nucleus. It is found in the nucleus speckle. In terms of biological role, component of the THO subcomplex of the TREX complex which is thought to couple mRNA transcription, processing and nuclear export, and which specifically associates with spliced mRNA and not with unspliced pre-mRNA. Plays a key structural role in the oligomerization of the THO-DDX39B complex. TREX is recruited to spliced mRNAs by a transcription-independent mechanism, binds to mRNA upstream of the exon-junction complex (EJC) and is recruited in a splicing- and cap-dependent manner to a region near the 5' end of the mRNA where it functions in mRNA export to the cytoplasm via the TAP/NXF1 pathway. Plays a role in apoptosis negative control involved in brain development. The sequence is that of THO complex subunit 6 homolog (Thoc6) from Mus musculus (Mouse).